Consider the following 265-residue polypeptide: uncharacterized protein (265 aa).

A divalent metal cation is bound by residues H7, H9, E95, H131, H156, and D206.

Belongs to the metallo-dependent hydrolases superfamily. TatD-type hydrolase family. The cofactor is a divalent metal cation.

This is an uncharacterized protein from Buchnera aphidicola subsp. Baizongia pistaciae (strain Bp).